A 367-amino-acid polypeptide reads, in one-letter code: Histidinol-phosphate aminotransferase (367 aa).

An N6-(pyridoxal phosphate)lysine modification is found at Lys226.

It belongs to the class-II pyridoxal-phosphate-dependent aminotransferase family. Histidinol-phosphate aminotransferase subfamily. Homodimer. The cofactor is pyridoxal 5'-phosphate.

It carries out the reaction L-histidinol phosphate + 2-oxoglutarate = 3-(imidazol-4-yl)-2-oxopropyl phosphate + L-glutamate. It participates in amino-acid biosynthesis; L-histidine biosynthesis; L-histidine from 5-phospho-alpha-D-ribose 1-diphosphate: step 7/9. The polypeptide is Histidinol-phosphate aminotransferase (Aliarcobacter butzleri (strain RM4018) (Arcobacter butzleri)).